Reading from the N-terminus, the 1436-residue chain is ABC transporter C family member 15 (1436 aa).

7 helical membrane passes run 8-28 (IINK…IYLY), 129-149 (YIAT…PLIL), 165-185 (IYIG…NMAS), 238-258 (FFQY…IQIL), 261-281 (LGFL…VMLI), 349-369 (IIYW…VLVS), and 373-393 (TYTL…ITIL). The ABC transmembrane type-1 1 domain occupies 128–412 (NYIATGLFVF…LPDCLHKFIS (285 aa)). One can recognise an ABC transporter 1 domain in the interval 543–766 (ADYQDLLSIN…IDFEMILKEK (224 aa)). Position 575 to 582 (575 to 582 (GGVRSGKT)) interacts with ATP. The ABC transmembrane type-1 2 domain occupies 865-1155 (KKYIRMGSSI…FMRQFGELES (291 aa)). Transmembrane regions (helical) follow at residues 873-893 (SISF…ILLL), 919-939 (LIYL…YLLI), 985-1005 (IDIL…CLVT), 1017-1039 (IAIP…NYSV), 1101-1121 (IGIR…LFSI), and 1127-1147 (GLSA…NWFM). The ABC transporter 2 domain maps to 1193–1426 (IEFKNVEIRY…STSRFSKLIK (234 aa)). 1227–1234 (GRSGSGKS) provides a ligand contact to ATP.

The protein belongs to the ABC transporter superfamily. ABCC family. Conjugate transporter (TC 3.A.1.208) subfamily.

It localises to the membrane. This chain is ABC transporter C family member 15 (abcC15), found in Dictyostelium discoideum (Social amoeba).